Here is a 396-residue protein sequence, read N- to C-terminus: Deoxyuridine 5'-triphosphate nucleotidohydrolase (396 aa).

Substrate-binding positions include 280-282 (RSS) and 380-381 (FG).

This sequence belongs to the dUTPase family. Mg(2+) serves as cofactor.

The catalysed reaction is dUTP + H2O = dUMP + diphosphate + H(+). In terms of biological role, involved in nucleotide metabolism: produces dUMP, the immediate precursor of thymidine nucleotides and decreases the intracellular concentration of dUTP to avoid uracil incorporation into viral DNA. The sequence is that of Deoxyuridine 5'-triphosphate nucleotidohydrolase from Homo sapiens (Human).